The chain runs to 161 residues: 2-C-methyl-D-erythritol 2,4-cyclodiphosphate synthase (161 aa).

Positions 13 and 15 each coordinate a divalent metal cation. 4-CDP-2-C-methyl-D-erythritol 2-phosphate contacts are provided by residues aspartate 13 to histidine 15 and histidine 40 to serine 41. An a divalent metal cation-binding site is contributed by histidine 48. Aspartate 62–glycine 64 contributes to the 4-CDP-2-C-methyl-D-erythritol 2-phosphate binding site.

This sequence belongs to the IspF family. Homotrimer. A divalent metal cation is required as a cofactor.

The catalysed reaction is 4-CDP-2-C-methyl-D-erythritol 2-phosphate = 2-C-methyl-D-erythritol 2,4-cyclic diphosphate + CMP. It participates in isoprenoid biosynthesis; isopentenyl diphosphate biosynthesis via DXP pathway; isopentenyl diphosphate from 1-deoxy-D-xylulose 5-phosphate: step 4/6. In terms of biological role, involved in the biosynthesis of isopentenyl diphosphate (IPP) and dimethylallyl diphosphate (DMAPP), two major building blocks of isoprenoid compounds. Catalyzes the conversion of 4-diphosphocytidyl-2-C-methyl-D-erythritol 2-phosphate (CDP-ME2P) to 2-C-methyl-D-erythritol 2,4-cyclodiphosphate (ME-CPP) with a corresponding release of cytidine 5-monophosphate (CMP). In Deinococcus radiodurans (strain ATCC 13939 / DSM 20539 / JCM 16871 / CCUG 27074 / LMG 4051 / NBRC 15346 / NCIMB 9279 / VKM B-1422 / R1), this protein is 2-C-methyl-D-erythritol 2,4-cyclodiphosphate synthase.